Consider the following 22-residue polypeptide: Cysteine protease inhibitor 4 (22 aa).

The protein belongs to the protease inhibitor I3 (leguminous Kunitz-type inhibitor) family. Tubers.

The protein resides in the vacuole. Inhibitor of papain (cysteine protease). Does not inhibit trypsin, chymotrypsin nor elastase (serine proteases). May protect the plant by inhibiting proteases of invading organisms. This is Cysteine protease inhibitor 4 from Solanum tuberosum (Potato).